A 2352-amino-acid chain; its full sequence is Ectopic P granules protein 5 (2352 aa).

Disordered regions lie at residues 1-112 and 1315-1335; these read MAEL…IFPR and KNRE…SSAK. Residues 66–81 are compositionally biased toward basic and acidic residues; sequence DSLKREEASEPLKDVR.

The protein belongs to the EPG5 family. As to expression, expressed in pharyngeal and body wall muscles and intestine cells.

The protein localises to the cytoplasm. It localises to the cytoplasmic vesicle. Its subcellular location is the phagosome membrane. Functionally, involved in the maturation of autophagosomes into autolysosomes during starvation-induced autotrophy. Specifically, involved in the clearance of apoptotic cells by promoting the delivery of engulfed apoptotic cells to the lysosome. This chain is Ectopic P granules protein 5, found in Caenorhabditis elegans.